We begin with the raw amino-acid sequence, 138 residues long: Large-conductance mechanosensitive channel (138 aa).

2 helical membrane passes run 10-30 and 76-96; these read FAMR…AAFG and GSFI…FLAI.

Belongs to the MscL family. As to quaternary structure, homopentamer.

The protein resides in the cell inner membrane. In terms of biological role, channel that opens in response to stretch forces in the membrane lipid bilayer. May participate in the regulation of osmotic pressure changes within the cell. This is Large-conductance mechanosensitive channel from Serratia proteamaculans (strain 568).